The primary structure comprises 267 residues: B3 domain-containing protein At3g11580 (267 aa).

Residues 29–143 (FEKSLTPSDV…RLFIGWRRRG (115 aa)) constitute a DNA-binding region (TF-B3).

It localises to the nucleus. The sequence is that of B3 domain-containing protein At3g11580 (ARF32) from Arabidopsis thaliana (Mouse-ear cress).